The following is a 249-amino-acid chain: Enolase-phosphatase E1 (249 aa).

Mg(2+) is bound by residues D15 and E17. Residues S146–S147 and K180 each bind substrate. Residue D205 coordinates Mg(2+).

This sequence belongs to the HAD-like hydrolase superfamily. MasA/MtnC family. In terms of assembly, monomer. It depends on Mg(2+) as a cofactor.

Its subcellular location is the cytoplasm. It localises to the nucleus. The catalysed reaction is 5-methylsulfanyl-2,3-dioxopentyl phosphate + H2O = 1,2-dihydroxy-5-(methylsulfanyl)pent-1-en-3-one + phosphate. Its pathway is amino-acid biosynthesis; L-methionine biosynthesis via salvage pathway; L-methionine from S-methyl-5-thio-alpha-D-ribose 1-phosphate: step 3/6. It participates in amino-acid biosynthesis; L-methionine biosynthesis via salvage pathway; L-methionine from S-methyl-5-thio-alpha-D-ribose 1-phosphate: step 4/6. In terms of biological role, bifunctional enzyme that catalyzes the enolization of 2,3-diketo-5-methylthiopentyl-1-phosphate (DK-MTP-1-P) into the intermediate 2-hydroxy-3-keto-5-methylthiopentenyl-1-phosphate (HK-MTPenyl-1-P), which is then dephosphorylated to form the acireductone 1,2-dihydroxy-3-keto-5-methylthiopentene (DHK-MTPene). The protein is Enolase-phosphatase E1 of Caenorhabditis briggsae.